The sequence spans 165 residues: MPASYSFDVVSDFDRQELVNTIDQVQREVSQRYDLKDSNTELNLVDEEIIIHTASDMTLKAVVDIVLQKATKRNLSLKIFDFQDPEASSGNRLKQVVLLKKGLAQDVAKKLSKSIRDQLKKVNVAIQGNSLRVTGKSKDDLQLAIEILRKQEDGLEIPLQFENYR.

This sequence belongs to the YajQ family.

Functionally, nucleotide-binding protein. In Prochlorococcus marinus (strain SARG / CCMP1375 / SS120), this protein is Nucleotide-binding protein Pro_0479.